The sequence spans 884 residues: Probable leucine--tRNA ligase, cytoplasmic (884 aa).

The short motif at 40–50 is the 'HIGH' region element; the sequence is PYMNGKLHLGH. Positions 566–570 match the 'KMSKS' region motif; the sequence is KMSKS. An ATP-binding site is contributed by K569.

The protein belongs to the class-I aminoacyl-tRNA synthetase family.

It is found in the cytoplasm. It catalyses the reaction tRNA(Leu) + L-leucine + ATP = L-leucyl-tRNA(Leu) + AMP + diphosphate. In Vairimorpha ceranae (strain BRL01) (Microsporidian parasite), this protein is Probable leucine--tRNA ligase, cytoplasmic.